A 254-amino-acid chain; its full sequence is Thiazole synthase (254 aa).

Lys95 serves as the catalytic Schiff-base intermediate with DXP. 1-deoxy-D-xylulose 5-phosphate-binding positions include Gly156, 182–183 (AG), and 204–205 (NT).

It belongs to the ThiG family. As to quaternary structure, homotetramer. Forms heterodimers with either ThiH or ThiS.

The protein resides in the cytoplasm. The enzyme catalyses [ThiS sulfur-carrier protein]-C-terminal-Gly-aminoethanethioate + 2-iminoacetate + 1-deoxy-D-xylulose 5-phosphate = [ThiS sulfur-carrier protein]-C-terminal Gly-Gly + 2-[(2R,5Z)-2-carboxy-4-methylthiazol-5(2H)-ylidene]ethyl phosphate + 2 H2O + H(+). It functions in the pathway cofactor biosynthesis; thiamine diphosphate biosynthesis. Catalyzes the rearrangement of 1-deoxy-D-xylulose 5-phosphate (DXP) to produce the thiazole phosphate moiety of thiamine. Sulfur is provided by the thiocarboxylate moiety of the carrier protein ThiS. In vitro, sulfur can be provided by H(2)S. The chain is Thiazole synthase from Shewanella sp. (strain W3-18-1).